Consider the following 190-residue polypeptide: Xanthine phosphoribosyltransferase (190 aa).

Residues leucine 20 and asparagine 27 each contribute to the xanthine site. Residue 128 to 132 (ANGNA) coordinates 5-phospho-alpha-D-ribose 1-diphosphate. Xanthine is bound at residue lysine 156.

It belongs to the purine/pyrimidine phosphoribosyltransferase family. Xpt subfamily. As to quaternary structure, homodimer.

The protein localises to the cytoplasm. The enzyme catalyses XMP + diphosphate = xanthine + 5-phospho-alpha-D-ribose 1-diphosphate. It functions in the pathway purine metabolism; XMP biosynthesis via salvage pathway; XMP from xanthine: step 1/1. Converts the preformed base xanthine, a product of nucleic acid breakdown, to xanthosine 5'-monophosphate (XMP), so it can be reused for RNA or DNA synthesis. In Clostridium novyi (strain NT), this protein is Xanthine phosphoribosyltransferase.